The chain runs to 401 residues: Phosphoglycerate kinase (401 aa).

Residues 29-31 (DFN), arginine 45, 69-72 (HLGR), arginine 125, and arginine 158 each bind substrate. ATP contacts are provided by residues lysine 209, glutamate 331, and 357–360 (GGDT).

The protein belongs to the phosphoglycerate kinase family. Monomer.

It is found in the cytoplasm. The enzyme catalyses (2R)-3-phosphoglycerate + ATP = (2R)-3-phospho-glyceroyl phosphate + ADP. The protein operates within carbohydrate degradation; glycolysis; pyruvate from D-glyceraldehyde 3-phosphate: step 2/5. The protein is Phosphoglycerate kinase of Wolinella succinogenes (strain ATCC 29543 / DSM 1740 / CCUG 13145 / JCM 31913 / LMG 7466 / NCTC 11488 / FDC 602W) (Vibrio succinogenes).